The primary structure comprises 242 residues: uncharacterized protein (242 aa).

The segment covering 1–12 has biased composition (basic and acidic residues); sequence MKLRRERFERRN. Positions 1–21 are disordered; it reads MKLRRERFERRNGSGKNSQSS. Over 1 to 23 the chain is Cytoplasmic; the sequence is MKLRRERFERRNGSGKNSQSSSS. The helical transmembrane segment at 24-44 threads the bilayer; sequence WMVTFTDLITLILVFFILLFS. At 45–242 the chain is on the extracellular side; that stretch reads MSQIDLQKFK…VIKKSKTTSS (198 aa). The disordered stretch occupies residues 64-91; it reads GNGLQPDQTSIEKKNTSPSDTKKQEDQQ. The span at 73–89 shows a compositional bias: basic and acidic residues; sequence SIEKKNTSPSDTKKQED. The 122-residue stretch at 117 to 238 folds into the OmpA-like domain; that stretch reads ERGVVLVLQE…RVEIVIKKSK (122 aa).

This sequence belongs to the MotB family.

Its subcellular location is the cell membrane. May be involved in some transport function. This is an uncharacterized protein from Bacillus subtilis (strain 168).